The following is a 521-amino-acid chain: Bifunctional purine biosynthesis protein PurH (521 aa).

An MGS-like domain is found at 1–149; the sequence is MSDPVIKRAL…KNNESVTVVT (149 aa).

Belongs to the PurH family.

The catalysed reaction is (6R)-10-formyltetrahydrofolate + 5-amino-1-(5-phospho-beta-D-ribosyl)imidazole-4-carboxamide = 5-formamido-1-(5-phospho-D-ribosyl)imidazole-4-carboxamide + (6S)-5,6,7,8-tetrahydrofolate. It catalyses the reaction IMP + H2O = 5-formamido-1-(5-phospho-D-ribosyl)imidazole-4-carboxamide. Its pathway is purine metabolism; IMP biosynthesis via de novo pathway; 5-formamido-1-(5-phospho-D-ribosyl)imidazole-4-carboxamide from 5-amino-1-(5-phospho-D-ribosyl)imidazole-4-carboxamide (10-formyl THF route): step 1/1. The protein operates within purine metabolism; IMP biosynthesis via de novo pathway; IMP from 5-formamido-1-(5-phospho-D-ribosyl)imidazole-4-carboxamide: step 1/1. This chain is Bifunctional purine biosynthesis protein PurH, found in Chlorobium phaeobacteroides (strain DSM 266 / SMG 266 / 2430).